Consider the following 408-residue polypeptide: UPF0761 membrane protein NMCC_0461 (408 aa).

The next 6 membrane-spanning stretches (helical) occupy residues Leu-43–Phe-63, Leu-100–Asp-120, Phe-139–Phe-159, Trp-176–Leu-196, Ala-210–Trp-230, and Val-248–Leu-268.

This sequence belongs to the UPF0761 family.

It is found in the cell inner membrane. The protein is UPF0761 membrane protein NMCC_0461 of Neisseria meningitidis serogroup C (strain 053442).